We begin with the raw amino-acid sequence, 64 residues long: Large ribosomal subunit protein bL28 (64 aa).

Belongs to the bacterial ribosomal protein bL28 family.

The protein is Large ribosomal subunit protein bL28 of Mycoplasmoides gallisepticum (strain R(low / passage 15 / clone 2)) (Mycoplasma gallisepticum).